Here is a 273-residue protein sequence, read N- to C-terminus: Tryptophan synthase alpha chain (273 aa).

Residues Glu49 and Asp60 each act as proton acceptor in the active site.

This sequence belongs to the TrpA family. In terms of assembly, tetramer of two alpha and two beta chains.

It catalyses the reaction (1S,2R)-1-C-(indol-3-yl)glycerol 3-phosphate + L-serine = D-glyceraldehyde 3-phosphate + L-tryptophan + H2O. It participates in amino-acid biosynthesis; L-tryptophan biosynthesis; L-tryptophan from chorismate: step 5/5. Functionally, the alpha subunit is responsible for the aldol cleavage of indoleglycerol phosphate to indole and glyceraldehyde 3-phosphate. The polypeptide is Tryptophan synthase alpha chain (Thiobacillus denitrificans (strain ATCC 25259 / T1)).